The sequence spans 164 residues: UPF0304 protein PC1_2778 (164 aa).

It belongs to the UPF0304 family.

This is UPF0304 protein PC1_2778 from Pectobacterium carotovorum subsp. carotovorum (strain PC1).